Reading from the N-terminus, the 198-residue chain is Probable nicotinate-nucleotide adenylyltransferase (198 aa).

This sequence belongs to the NadD family.

The enzyme catalyses nicotinate beta-D-ribonucleotide + ATP + H(+) = deamido-NAD(+) + diphosphate. The protein operates within cofactor biosynthesis; NAD(+) biosynthesis; deamido-NAD(+) from nicotinate D-ribonucleotide: step 1/1. In terms of biological role, catalyzes the reversible adenylation of nicotinate mononucleotide (NaMN) to nicotinic acid adenine dinucleotide (NaAD). This Herpetosiphon aurantiacus (strain ATCC 23779 / DSM 785 / 114-95) protein is Probable nicotinate-nucleotide adenylyltransferase.